Reading from the N-terminus, the 380-residue chain is Cytochrome b (380 aa).

Helical transmembrane passes span 33-53 (FGSL…FLAM), 77-98 (WFIR…YLHI), 113-133 (WTIG…GYVL), and 178-198 (FFTF…VHLL). Heme b-binding residues include H83 and H97. Residues H182 and H196 each contribute to the heme b site. H201 contributes to the a ubiquinone binding site. 4 consecutive transmembrane segments (helical) span residues 226–246 (YKDL…ALFS), 288–308 (LGGV…PILH), 320–340 (LTQT…WIGG), and 347–367 (FVII…VLAP).

This sequence belongs to the cytochrome b family. As to quaternary structure, the cytochrome bc1 complex contains 3 respiratory subunits (MT-CYB, CYC1 and UQCRFS1), 2 core proteins (UQCRC1 and UQCRC2) and probably 6 low-molecular weight proteins. The cofactor is heme b.

Its subcellular location is the mitochondrion inner membrane. Component of the ubiquinol-cytochrome c reductase complex (complex III or cytochrome b-c1 complex) that is part of the mitochondrial respiratory chain. The b-c1 complex mediates electron transfer from ubiquinol to cytochrome c. Contributes to the generation of a proton gradient across the mitochondrial membrane that is then used for ATP synthesis. This chain is Cytochrome b (mt-cyb), found in Lampris guttatus (Opah).